Reading from the N-terminus, the 530-residue chain is UDP-N-acetylmuramoyl-L-alanyl-D-glutamate--2,6-diaminopimelate ligase (530 aa).

Ser-21 contacts UDP-N-acetyl-alpha-D-muramoyl-L-alanyl-D-glutamate. ATP is bound at residue 99–105; that stretch reads GTNGKSS. UDP-N-acetyl-alpha-D-muramoyl-L-alanyl-D-glutamate contacts are provided by residues 145 to 146, Ser-172, Gln-178, and Arg-180; that span reads TT. Lys-212 is modified (N6-carboxylysine). The RPE1 insert domain maps to 221-269; that stretch reads FKPAYREEFKGDTEHSTTAYILVREDASTGSTSKLLLEAKFGKMSTEYL. Meso-2,6-diaminopimelate is bound by residues Arg-422, 446 to 449, Gly-496, and Glu-500; that span reads DNPR. The Meso-diaminopimelate recognition motif signature appears at 446-449; sequence DNPR.

This sequence belongs to the MurCDEF family. MurE subfamily. Mg(2+) is required as a cofactor. Carboxylation is probably crucial for Mg(2+) binding and, consequently, for the gamma-phosphate positioning of ATP.

It localises to the cytoplasm. It catalyses the reaction UDP-N-acetyl-alpha-D-muramoyl-L-alanyl-D-glutamate + meso-2,6-diaminopimelate + ATP = UDP-N-acetyl-alpha-D-muramoyl-L-alanyl-gamma-D-glutamyl-meso-2,6-diaminopimelate + ADP + phosphate + H(+). The protein operates within cell wall biogenesis; peptidoglycan biosynthesis. Its function is as follows. Catalyzes the addition of meso-diaminopimelic acid to the nucleotide precursor UDP-N-acetylmuramoyl-L-alanyl-D-glutamate (UMAG) in the biosynthesis of bacterial cell-wall peptidoglycan. The protein is UDP-N-acetylmuramoyl-L-alanyl-D-glutamate--2,6-diaminopimelate ligase of Rickettsia felis (strain ATCC VR-1525 / URRWXCal2) (Rickettsia azadi).